The sequence spans 181 residues: Adenylyl-sulfate kinase (181 aa).

Position 20 to 27 (20 to 27 (GLSGAGKS)) interacts with ATP. Ser94 serves as the catalytic Phosphoserine intermediate.

The protein belongs to the APS kinase family.

The enzyme catalyses adenosine 5'-phosphosulfate + ATP = 3'-phosphoadenylyl sulfate + ADP + H(+). The protein operates within sulfur metabolism; hydrogen sulfide biosynthesis; sulfite from sulfate: step 2/3. Its function is as follows. Catalyzes the synthesis of activated sulfate. The sequence is that of Adenylyl-sulfate kinase from Deinococcus deserti (strain DSM 17065 / CIP 109153 / LMG 22923 / VCD115).